A 1679-amino-acid polypeptide reads, in one-letter code: Protein MLP2 (1679 aa).

Coiled coils occupy residues 32–176 (AKFE…KYDT), 233–466 (YNKF…RQVK), 516–1064 (FSNV…EREL), and 1099–1491 (KLVS…ENAG). Short sequence motifs (bipartite nuclear localization signal) lie at residues 417-433 (KRST…KRKQ), 639-655 (RKEL…KKTT), and 1433-1449 (KKEW…RRIK). Disordered stretches follow at residues 1495–1521 (FLDN…SERP) and 1632–1679 (DLTN…ASNE). Polar residues-rich tracts occupy residues 1511-1520 (NSPSKGNSER) and 1646-1661 (IGST…TSSD). Position 1512 is a phosphoserine (serine 1512). A compositionally biased stretch (basic and acidic residues) spans 1662-1671 (PDTKKVKESP). Serine 1670 is subject to Phosphoserine.

Component of the nuclear complex (NPC). NPC constitutes the exclusive means of nucleocytoplasmic transport. NPCs allow the passive diffusion of ions and small molecules and the active, nuclear transport receptor-mediated bidirectional transport of macromolecules such as proteins, RNAs, ribonucleoparticles (RNPs), and ribosomal subunits across the nuclear envelope. Due to its 8-fold rotational symmetry, all subunits are present with 8 copies or multiples thereof. Interacts with NUP60 and NIC96, which tether it to the nuclear pore complex. Component of the spindle pole body core in which it interacts directly with SPC110, SPC42 and SPC29. Also interacts with YKU70 (HDF1) and MLP1.

The protein resides in the nucleus. Its subcellular location is the cytoplasm. It is found in the cytoskeleton. It localises to the microtubule organizing center. The protein localises to the spindle pole body. The protein resides in the nuclear pore complex. Together with the closely related MLP1, involved in the structural and functional organization of perinuclear chromatin. MLP1/MLP2 associate with the nuclear pore complex and form filamentous structures along the nuclear periphery. Has a role in the localization of Esc1 to nucleolar regions. Together with MLP1, mediates tethering of the some telomeres to the nuclear periphery, probably mediated by YKU70/YKU80 (HDF1/HDF2) heterodimer and show perinuclear location dependent silencing. MLP1 and MLP2 are involved in telomere length regulation but not silencing or telomere anchoring. Plays a role in the incorporation of components into the spindle pole body. Involved in double-strand break repair, probably also mediated by the YKU70/YKU80 (HDF1/HDF2) heterodimer. This Saccharomyces cerevisiae (strain ATCC 204508 / S288c) (Baker's yeast) protein is Protein MLP2 (MLP2).